The chain runs to 127 residues: MGLLFALGSVVLVSAAQLLLKWAMIQLPDISQLPQFLSSLSQFPLPTAALFLGLLAYALSMLCWLLALKRLPLSRAYPLLSLSYLLVWLAALWLPGLNEVFRWGKLAGAGLIVSGLLLICWPAAKTR.

Over 1–2 (MG) the chain is Cytoplasmic. A helical transmembrane segment spans residues 3–23 (LLFALGSVVLVSAAQLLLKWA). Over 24–47 (MIQLPDISQLPQFLSSLSQFPLPT) the chain is Periplasmic. Residues 48-68 (AALFLGLLAYALSMLCWLLAL) form a helical membrane-spanning segment. At 69–76 (KRLPLSRA) the chain is on the cytoplasmic side. Residues 77–97 (YPLLSLSYLLVWLAALWLPGL) form a helical membrane-spanning segment. Over 98 to 102 (NEVFR) the chain is Periplasmic. Residues 103 to 123 (WGKLAGAGLIVSGLLLICWPA) traverse the membrane as a helical segment. Residues 124-127 (AKTR) lie on the Cytoplasmic side of the membrane.

This sequence belongs to the ArnF family. As to quaternary structure, heterodimer of ArnE and ArnF.

Its subcellular location is the cell inner membrane. Its pathway is bacterial outer membrane biogenesis; lipopolysaccharide biosynthesis. In terms of biological role, translocates 4-amino-4-deoxy-L-arabinose-phosphoundecaprenol (alpha-L-Ara4N-phosphoundecaprenol) from the cytoplasmic to the periplasmic side of the inner membrane. The polypeptide is Probable 4-amino-4-deoxy-L-arabinose-phosphoundecaprenol flippase subunit ArnF (Erwinia tasmaniensis (strain DSM 17950 / CFBP 7177 / CIP 109463 / NCPPB 4357 / Et1/99)).